The sequence spans 348 residues: Erythronate-4-phosphate dehydrogenase (348 aa).

Residues Thr-46 and Thr-67 each contribute to the substrate site. Asp-147 is a binding site for NAD(+). The active site involves Arg-209. Residue Asp-233 participates in NAD(+) binding. Glu-238 is a catalytic residue. His-255 acts as the Proton donor in catalysis. Gly-258 is an NAD(+) binding site. Tyr-259 is a binding site for substrate.

The protein belongs to the D-isomer specific 2-hydroxyacid dehydrogenase family. PdxB subfamily. As to quaternary structure, homodimer.

The protein resides in the cytoplasm. The enzyme catalyses 4-phospho-D-erythronate + NAD(+) = (R)-3-hydroxy-2-oxo-4-phosphooxybutanoate + NADH + H(+). Its pathway is cofactor biosynthesis; pyridoxine 5'-phosphate biosynthesis; pyridoxine 5'-phosphate from D-erythrose 4-phosphate: step 2/5. Functionally, catalyzes the oxidation of erythronate-4-phosphate to 3-hydroxy-2-oxo-4-phosphonooxybutanoate. The sequence is that of Erythronate-4-phosphate dehydrogenase from Bacteroides thetaiotaomicron (strain ATCC 29148 / DSM 2079 / JCM 5827 / CCUG 10774 / NCTC 10582 / VPI-5482 / E50).